Consider the following 316-residue polypeptide: Coiled-coil domain-containing protein 42 (316 aa).

Coiled-coil stretches lie at residues 39-146 (SPSI…SAKL) and 178-232 (LVSM…DRAR).

The protein belongs to the CFAP73 family. As to quaternary structure, interacts with ODF1 and ODF2. Interacts with CCDC38. Interacts with CCDC146. Interacts with CFAP53.

It localises to the cytoplasm. The protein localises to the perinuclear region. The protein resides in the cytoskeleton. It is found in the cell projection. Its subcellular location is the cilium. It localises to the flagellum. The protein localises to the microtubule organizing center. The protein resides in the centrosome. Functionally, essential for male fertility. Required for sperm development. In Homo sapiens (Human), this protein is Coiled-coil domain-containing protein 42.